The chain runs to 277 residues: MDVNTERSVFYISDGTAITAEVLGHAVMSQFPVATHGVTLPFVETVQRAQAVKAQINALYQQSGLRPLVFISIVTPVIRDIILQSDGFCQDIVQSLVGPLQQELGLLPAPVANRTHGLTAGNLSKYDARIAAIDYTLAHDDGISLRGLEDAQVILLGVSRCGKTPTSLYLAMQFGIRAANYPFIADDMDNLKLPAALKPFQHKLFGLTIEPERLAAIRQERAENTRYASLRQCRLEVGEVEALFRTQQIRYLNSTNYSVEEIATKILDIMSLTRRMY.

157–164 (GVSRCGKT) lines the ADP pocket.

It belongs to the pyruvate, phosphate/water dikinase regulatory protein family. PSRP subfamily.

The catalysed reaction is [pyruvate, water dikinase] + ADP = [pyruvate, water dikinase]-phosphate + AMP + H(+). It catalyses the reaction [pyruvate, water dikinase]-phosphate + phosphate + H(+) = [pyruvate, water dikinase] + diphosphate. In terms of biological role, bifunctional serine/threonine kinase and phosphorylase involved in the regulation of the phosphoenolpyruvate synthase (PEPS) by catalyzing its phosphorylation/dephosphorylation. This chain is Putative phosphoenolpyruvate synthase regulatory protein, found in Erwinia tasmaniensis (strain DSM 17950 / CFBP 7177 / CIP 109463 / NCPPB 4357 / Et1/99).